The following is a 2641-amino-acid chain: Inverse autotransporter adhesin YeeJ (2641 aa).

Residues 1–25 form the signal peptide; that stretch reads MGIKLRRLTAGICLITQLVFPMAAA. The region spanning 50–98 is the LysM domain; that stretch reads VPYTLGALESAQSVAERFGISVAELRKLNQFRTFARGFDNVRQGDELDV. Residues 125–400 are inverse autotransporter; the sequence is TSQQIGSLLA…SRFDLVDRNN (276 aa). An invasin 3 domain region spans residues 513–605; that stretch reads QKDSSVSLSS…GVDAAKAPAV (93 aa). 17 consecutive Big-1 domains span residues 617–711, 721–815, 822–913, 920–1017, 1024–1116, 1123–1220, 1227–1319, 1326–1423, 1430–1523, 1531–1633, 1641–1734, 1741–1837, 1844–1941, 1948–2032, 2048–2141, 2142–2235, and 2244–2336; these read HSSI…AGFI, IATL…VSFV, QVDL…VIFI, ALTL…MTFV, VVVL…VNIA, QVTL…VTFV, LVVL…VHFI, IIEL…SINV, HLTL…VTYV, EISL…VNFI, QVNL…VTLI, KLAS…PTEV, ITSL…VIDQ, KLTL…IVKV, and VASF…ITLV. Residues 2538–2641 are C-type lectin domain; sequence KSWWVNAGDA…FAYATCYKNL (104 aa).

This sequence belongs to the intimin/invasin family.

It localises to the cell outer membrane. Functionally, a probable inverse autotransporter, it may be involved in biofilm formation and cell adhesion. May bind peptidoglycan via its LysM domain. This chain is Inverse autotransporter adhesin YeeJ (yeeJ), found in Escherichia coli O157:H7.